A 635-amino-acid chain; its full sequence is Threonine--tRNA ligase (635 aa).

A TGS domain is found at 1-61; that stretch reads MPIITLPDGN…EKDANIAIIT (61 aa). Positions 242–533 are catalytic; sequence DHRKIGKQLD…LTEEYAGVYP (292 aa). Positions 333, 384, and 510 each coordinate Zn(2+).

The protein belongs to the class-II aminoacyl-tRNA synthetase family. As to quaternary structure, homodimer. Zn(2+) serves as cofactor.

The protein localises to the cytoplasm. The enzyme catalyses tRNA(Thr) + L-threonine + ATP = L-threonyl-tRNA(Thr) + AMP + diphosphate + H(+). Catalyzes the attachment of threonine to tRNA(Thr) in a two-step reaction: L-threonine is first activated by ATP to form Thr-AMP and then transferred to the acceptor end of tRNA(Thr). Also edits incorrectly charged L-seryl-tRNA(Thr). This is Threonine--tRNA ligase from Psychromonas ingrahamii (strain DSM 17664 / CCUG 51855 / 37).